The following is a 490-amino-acid chain: Cytochrome P450 2C29 (490 aa).

A signal peptide spans 1–25; the sequence is MDLVVFLALTLSCLILLSLWRQSSG. N6-acetyllysine occurs at positions 249, 252, and 375. Cys435 lines the heme pocket.

Belongs to the cytochrome P450 family. Heme is required as a cofactor. In terms of tissue distribution, expressed in liver as well as in extrahepatic tissues including brain, kidney, lung, heart, and intestine.

The protein localises to the endoplasmic reticulum membrane. It is found in the microsome membrane. It catalyses the reaction an organic molecule + reduced [NADPH--hemoprotein reductase] + O2 = an alcohol + oxidized [NADPH--hemoprotein reductase] + H2O + H(+). It carries out the reaction (5Z,8Z,11Z,14Z)-eicosatetraenoate + reduced [NADPH--hemoprotein reductase] + O2 = 14,15-epoxy-(5Z,8Z,11Z)-eicosatrienoate + oxidized [NADPH--hemoprotein reductase] + H2O + H(+). The protein operates within lipid metabolism; arachidonate metabolism. Functionally, a cytochrome P450 monooxygenase that selectively catalyzes the epoxidation of 14,15 double bond of (5Z,8Z,11Z,14Z)-eicosatetraenoic acid (arachidonate) forming 14,15-epoxyeicosatrienoic acid (14,15-EET) regioisomer. Mechanistically, uses molecular oxygen inserting one oxygen atom into a substrate, and reducing the second into a water molecule, with two electrons provided by NADPH via cytochrome P450 reductase (CPR; NADPH--hemoprotein reductase). The sequence is that of Cytochrome P450 2C29 from Mus musculus (Mouse).